Consider the following 891-residue polypeptide: Aconitate hydratase A (891 aa).

Positions 435, 501, and 504 each coordinate [4Fe-4S] cluster.

It belongs to the aconitase/IPM isomerase family. In terms of assembly, monomer. [4Fe-4S] cluster serves as cofactor.

It catalyses the reaction citrate = D-threo-isocitrate. It carries out the reaction (2S,3R)-3-hydroxybutane-1,2,3-tricarboxylate = 2-methyl-cis-aconitate + H2O. The protein operates within carbohydrate metabolism; tricarboxylic acid cycle; isocitrate from oxaloacetate: step 2/2. Its pathway is organic acid metabolism; propanoate degradation. In terms of biological role, involved in the catabolism of short chain fatty acids (SCFA) via the tricarboxylic acid (TCA)(acetyl degradation route) and the 2-methylcitrate cycle I (propionate degradation route). Catalyzes the reversible isomerization of citrate to isocitrate via cis-aconitate. Also catalyzes the hydration of 2-methyl-cis-aconitate to yield (2R,3S)-2-methylisocitrate. The (2S,3S)-2-methylcitrate (2-MC) is a very poor substrate. The apo form of AcnA functions as a RNA-binding regulatory protein. The polypeptide is Aconitate hydratase A (acnA) (Salmonella typhimurium (strain LT2 / SGSC1412 / ATCC 700720)).